The chain runs to 406 residues: 5-methylthioadenosine/S-adenosylhomocysteine deaminase (406 aa).

Zn(2+)-binding residues include histidine 55 and histidine 57. Substrate-binding residues include glutamate 84, arginine 136, arginine 148, and histidine 173. Histidine 200 is a Zn(2+) binding site. Positions 203 and 279 each coordinate substrate. Residue aspartate 279 participates in Zn(2+) binding.

It belongs to the metallo-dependent hydrolases superfamily. MTA/SAH deaminase family. Zn(2+) serves as cofactor.

It carries out the reaction S-adenosyl-L-homocysteine + H2O + H(+) = S-inosyl-L-homocysteine + NH4(+). The catalysed reaction is S-methyl-5'-thioadenosine + H2O + H(+) = S-methyl-5'-thioinosine + NH4(+). Catalyzes the deamination of 5-methylthioadenosine and S-adenosyl-L-homocysteine into 5-methylthioinosine and S-inosyl-L-homocysteine, respectively. Is also able to deaminate adenosine. Adenosine-5-monophosphate (AMP) and S-adenosyl-L-methionine (SAM) are not enzyme substrates. This chain is 5-methylthioadenosine/S-adenosylhomocysteine deaminase (mtaD), found in Thermotoga maritima (strain ATCC 43589 / DSM 3109 / JCM 10099 / NBRC 100826 / MSB8).